Here is a 123-residue protein sequence, read N- to C-terminus: MQVWPPLGLKKFETLSYLPPLTTEQLLAEVNYLLVKGWIPPLEFEVKDGFVYREHDKSPGYYDGRYWTMWKLPMFGGTDPAQVVNEVEEVKKAPPDAFVRFIGFNDKREVQCISFIAYKPAGY.

Met1 is modified (methionine derivative).

The protein belongs to the RuBisCO small chain family. As to quaternary structure, heterohexadecamer of 8 large and 8 small subunits.

It is found in the plastid. Its subcellular location is the chloroplast. RuBisCO catalyzes two reactions: the carboxylation of D-ribulose 1,5-bisphosphate, the primary event in carbon dioxide fixation, as well as the oxidative fragmentation of the pentose substrate. Both reactions occur simultaneously and in competition at the same active site. Although the small subunit is not catalytic it is essential for maximal activity. This is Ribulose bisphosphate carboxylase small subunit, chloroplastic 1 from Spinacia oleracea (Spinach).